We begin with the raw amino-acid sequence, 405 residues long: Phosphopentomutase (405 aa).

Residues Asp10, Asp303, His308, Asp344, His345, and His356 each contribute to the Mn(2+) site.

Belongs to the phosphopentomutase family. Requires Mn(2+) as cofactor.

It is found in the cytoplasm. The catalysed reaction is 2-deoxy-alpha-D-ribose 1-phosphate = 2-deoxy-D-ribose 5-phosphate. It carries out the reaction alpha-D-ribose 1-phosphate = D-ribose 5-phosphate. It functions in the pathway carbohydrate degradation; 2-deoxy-D-ribose 1-phosphate degradation; D-glyceraldehyde 3-phosphate and acetaldehyde from 2-deoxy-alpha-D-ribose 1-phosphate: step 1/2. Its function is as follows. Isomerase that catalyzes the conversion of deoxy-ribose 1-phosphate (dRib-1-P) and ribose 1-phosphate (Rib-1-P) to deoxy-ribose 5-phosphate (dRib-5-P) and ribose 5-phosphate (Rib-5-P), respectively. The chain is Phosphopentomutase from Shewanella sediminis (strain HAW-EB3).